Reading from the N-terminus, the 270-residue chain is Acetyl-coenzyme A carboxylase carboxyl transferase subunit beta (270 aa).

Residues 16–270 (LFAKCPACKH…KLLAFHGGSK (255 aa)) form the CoA carboxyltransferase N-terminal domain. The Zn(2+) site is built by Cys-20, Cys-23, Cys-38, and Cys-41. The C4-type zinc-finger motif lies at 20-41 (CPACKHMIYQKDLGLEKICPKC).

The protein belongs to the AccD/PCCB family. In terms of assembly, acetyl-CoA carboxylase is a heterohexamer composed of biotin carboxyl carrier protein (AccB), biotin carboxylase (AccC) and two subunits each of ACCase subunit alpha (AccA) and ACCase subunit beta (AccD). Zn(2+) serves as cofactor.

The protein resides in the cytoplasm. It catalyses the reaction N(6)-carboxybiotinyl-L-lysyl-[protein] + acetyl-CoA = N(6)-biotinyl-L-lysyl-[protein] + malonyl-CoA. It functions in the pathway lipid metabolism; malonyl-CoA biosynthesis; malonyl-CoA from acetyl-CoA: step 1/1. Component of the acetyl coenzyme A carboxylase (ACC) complex. Biotin carboxylase (BC) catalyzes the carboxylation of biotin on its carrier protein (BCCP) and then the CO(2) group is transferred by the transcarboxylase to acetyl-CoA to form malonyl-CoA. The polypeptide is Acetyl-coenzyme A carboxylase carboxyl transferase subunit beta (Streptococcus mutans serotype c (strain NN2025)).